We begin with the raw amino-acid sequence, 509 residues long: Cytochrome P450 6A1 (509 aa).

Cysteine 449 is a binding site for heme.

It belongs to the cytochrome P450 family. The cofactor is heme.

It localises to the endoplasmic reticulum membrane. It is found in the microsome membrane. The catalysed reaction is an organic molecule + reduced [NADPH--hemoprotein reductase] + O2 = an alcohol + oxidized [NADPH--hemoprotein reductase] + H2O + H(+). In terms of biological role, involved in the metabolism of insect hormones and in the breakdown of synthetic insecticides. The polypeptide is Cytochrome P450 6A1 (CYP6A1) (Musca domestica (House fly)).